Here is a 352-residue protein sequence, read N- to C-terminus: ER-derived vesicles protein ERV41 (352 aa).

The Cytoplasmic portion of the chain corresponds to 1-23 (MAGLKTFDAFPKTEEQYKKKSTK). The helical transmembrane segment at 24–44 (GGLTSLLTYLFLLFIAWTEFG) threads the bilayer. The Lumenal portion of the chain corresponds to 45–311 (EYFGGYIDQQ…FLVRLVAICS (267 aa)). The helical transmembrane segment at 312-332 (FLVYCASWIFTLLDMALITIM) threads the bilayer. Residues 333-352 (GPKWSLRYQPDDKTKGILDR) lie on the Cytoplasmic side of the membrane. The Isoleucine-leucine motif motif lies at 349–350 (IL).

Belongs to the ERGIC family. As to quaternary structure, interacts with ERV46.

The protein localises to the endoplasmic reticulum membrane. It is found in the golgi apparatus membrane. Its subcellular location is the cytoplasmic vesicle. The protein resides in the COPII-coated vesicle membrane. Its function is as follows. Constituent of COPII-coated endoplasmic reticulum-derived transport vesicles. Required for efficient transport of a subset of secretory proteins to the Golgi. The C-terminal Ile-Leu motif is required for exit from the endoplasmic reticulum. Facilitates retrograde transport from the Golgi to the endoplasmic reticulum. The sequence is that of ER-derived vesicles protein ERV41 (ERV41) from Saccharomyces cerevisiae (strain ATCC 204508 / S288c) (Baker's yeast).